A 454-amino-acid chain; its full sequence is MWPLTVPPPLLLLLCSGLAGQTLFQNPEEGWQLYTSAQAPDGKCICTAVIPAQSTCSRDGRSRELRQLMEKVQNVSQSMEVLELRTYRDLQYVRGMETLMRSLDARLRAADGSLSAKSFQELKDRMTELLPLSSVLEQYKADTRTIVRLREEVRNLSGSLAAIQEEMGAYGYEDLQQRVMALEARLHACAQKLGCGKLTGVSNPITVRAMGSRFGSWMTDTMAPSADSRVWYMDGYYKGRRVLEFRTLGDFIKGQNFIQHLLPQPWAGTGHVVYNGSLFYNKYQSNVVVKYHFRSRSVLVQRSLPGAGYNNTFPYSWGGFSDMDFMVDESGLWAVYTTNQNAGNIVVSRLDPHTLEVMRSWDTGYPKRSAGEAFMICGVLYVTNSHLAGAKVYFAYFTNTSSYEYTDVPFHNQYSHISMLDYNPRERALYTWNNGHQVLYNVTLFHVISTSGDP.

A signal peptide spans 1 to 20 (MWPLTVPPPLLLLLCSGLAG). Coiled coils occupy residues 58 to 85 (RDGR…LELR) and 136 to 193 (LEQY…AQKL). 6 N-linked (GlcNAc...) asparagine glycosylation sites follow: Asn74, Asn155, Asn275, Asn310, Asn399, and Asn441. The Olfactomedin-like domain occupies 194–446 (GCGKLTGVSN…QVLYNVTLFH (253 aa)). Cys195 and Cys377 form a disulfide bridge.

Peripherally associated with AMPAR complex. AMPAR complex consists of an inner core made of 4 pore-forming GluA/GRIA proteins (GRIA1, GRIA2, GRIA3 and GRIA4) and 4 major auxiliary subunits arranged in a twofold symmetry. One of the two pairs of distinct binding sites is occupied either by CNIH2, CNIH3 or CACNG2, CACNG3. The other harbors CACNG2, CACNG3, CACNG4, CACNG8 or GSG1L. This inner core of AMPAR complex is complemented by outer core constituents binding directly to the GluA/GRIA proteins at sites distinct from the interaction sites of the inner core constituents. Outer core constituents include at least PRRT1, PRRT2, CKAMP44/SHISA9, FRRS1L and NRN1. The proteins of the inner and outer core serve as a platform for other, more peripherally associated AMPAR constituents, including OLFM2. Alone or in combination, these auxiliary subunits control the gating and pharmacology of the AMPAR complex and profoundly impact their biogenesis and protein processing. Interacts with GRIA2. Interacts with OLFM1 and OLFM3. Interacts with SRF; the interaction promotes dissociation of SRF from the transcriptional repressor HEY2. Interacts with RUNX2. N-glycosylated. In terms of tissue distribution, expressed in aortic smooth muscle (at protein level). In the fetus, expressed in the brain and ocular tissues including lens vesicle and optic cup.

It localises to the secreted. The protein localises to the synapse. The protein resides in the membrane. It is found in the nucleus. Its subcellular location is the cytoplasm. Functionally, involved in transforming growth factor beta (TGF-beta)-induced smooth muscle differentiation. TGF-beta induces expression and translocation of OLFM2 to the nucleus where it binds to SRF, causing its dissociation from the transcriptional repressor HEY2/HERP1 and facilitating binding of SRF to target genes. Plays a role in AMPAR complex organization. Is a regulator of vascular smooth-muscle cell (SMC) phenotypic switching, that acts by promoting RUNX2 and inhibiting MYOCD binding to SRF. SMC phenotypic switching is the process through which vascular SMCs undergo transition between a quiescent contractile phenotype and a proliferative synthetic phenotype in response to pathological stimuli. SMC phenotypic plasticity is essential for vascular development and remodeling. The polypeptide is Noelin-2 (OLFM2) (Homo sapiens (Human)).